We begin with the raw amino-acid sequence, 201 residues long: Recombination protein RecR (201 aa).

The C4-type zinc-finger motif lies at 57–72 (CADCRTFTEQPVCTIC). The 96-residue stretch at 81-176 (GQICVVESPA…MASRIAHGVP (96 aa)) folds into the Toprim domain.

The protein belongs to the RecR family.

Its function is as follows. May play a role in DNA repair. It seems to be involved in an RecBC-independent recombinational process of DNA repair. It may act with RecF and RecO. This Sodalis glossinidius (strain morsitans) protein is Recombination protein RecR.